A 233-amino-acid polypeptide reads, in one-letter code: 5'-methylthioadenosine/S-adenosylhomocysteine nucleosidase (233 aa).

The Proton acceptor role is filled by Glu12. Residues Gly78, Ile152, and 173–174 contribute to the substrate site; that span reads ME. The active-site Proton donor is the Asp197.

Belongs to the PNP/UDP phosphorylase family. MtnN subfamily. In terms of assembly, homodimer.

The enzyme catalyses S-adenosyl-L-homocysteine + H2O = S-(5-deoxy-D-ribos-5-yl)-L-homocysteine + adenine. The catalysed reaction is S-methyl-5'-thioadenosine + H2O = 5-(methylsulfanyl)-D-ribose + adenine. It catalyses the reaction 5'-deoxyadenosine + H2O = 5-deoxy-D-ribose + adenine. It participates in amino-acid biosynthesis; L-methionine biosynthesis via salvage pathway; S-methyl-5-thio-alpha-D-ribose 1-phosphate from S-methyl-5'-thioadenosine (hydrolase route): step 1/2. In terms of biological role, catalyzes the irreversible cleavage of the glycosidic bond in both 5'-methylthioadenosine (MTA) and S-adenosylhomocysteine (SAH/AdoHcy) to adenine and the corresponding thioribose, 5'-methylthioribose and S-ribosylhomocysteine, respectively. Also cleaves 5'-deoxyadenosine, a toxic by-product of radical S-adenosylmethionine (SAM) enzymes, into 5-deoxyribose and adenine. Thus, is required for in vivo function of the radical SAM enzymes biotin synthase and lipoic acid synthase, that are inhibited by 5'-deoxyadenosine accumulation. This chain is 5'-methylthioadenosine/S-adenosylhomocysteine nucleosidase, found in Sodalis glossinidius (strain morsitans).